Here is a 389-residue protein sequence, read N- to C-terminus: Globin-like protein 6 (389 aa).

Over residues 1 to 15 (MGNQSTKSTHGTTRV) the composition is skewed to polar residues. Disordered stretches follow at residues 1–38 (MGNQ…RSAS), 96–123 (RTSK…SVDS), and 143–185 (TVSS…SSNP). Residues 16–25 (SHSKSAHHNS) show a composition bias toward basic residues. Residues 196-347 (HLTQPQILFV…VTEQLKEGFQ (152 aa)) form the Globin domain. 2 residues coordinate heme b: H254 and H286. Positions 367-389 (SSFEISTKTKQSDMKRFHTLDNM) are disordered. Positions 376–389 (KQSDMKRFHTLDNM) are enriched in basic and acidic residues.

This sequence belongs to the globin family. In terms of tissue distribution, expressed in the head and tail neurons and nerve cord.

In terms of biological role, may play a role as physiological sensor for oxygen via redox signaling and/or electron transport. The polypeptide is Globin-like protein 6 (Caenorhabditis elegans).